Reading from the N-terminus, the 403-residue chain is MSVAEQMAIIKRGATEILLEKELEEKIEKSLSTGVPLRIKAGFDPTAPDLHLGHTVLLHKMRQFQQLGHEVCFLIGDFTGMIGDPTGKSETRKALTREDVLKNAETYKEQVFKILDPKKTRVVFNSEWLGKMTASDMIGLAAQSTVARMLERDDFGKRFANQLPISIHEFLYPLIQGYDSVALKADVELGGTDQKFNLLVGRELQRVWKQSPQSVITMPLLEGLDGVNKMSKSLGNYIGINEPADEIFGKIMSISDELMLRYYELLSDLTLAEIEKLKAAMRDGDVHPMAAKKQLAREIVARYHGAVAADNAEESFVRRFRDNQTPEEMPECILSAEEGKVLLGRLLAEAGLVKSNSEGRRAINQGGVKVNGEKVTNDMLELPGVGEYVLQFGKRRFARIVFK.

Residues 45–54 carry the 'HIGH' region motif; the sequence is PTAPDLHLGH. The 'KMSKS' region motif lies at 229–233; it reads KMSKS. Residue Lys232 coordinates ATP. In terms of domain architecture, S4 RNA-binding spans 341 to 402; the sequence is VLLGRLLAEA…GKRRFARIVF (62 aa).

This sequence belongs to the class-I aminoacyl-tRNA synthetase family. TyrS type 2 subfamily. In terms of assembly, homodimer.

It localises to the cytoplasm. It carries out the reaction tRNA(Tyr) + L-tyrosine + ATP = L-tyrosyl-tRNA(Tyr) + AMP + diphosphate + H(+). Functionally, catalyzes the attachment of tyrosine to tRNA(Tyr) in a two-step reaction: tyrosine is first activated by ATP to form Tyr-AMP and then transferred to the acceptor end of tRNA(Tyr). The sequence is that of Tyrosine--tRNA ligase from Geobacter metallireducens (strain ATCC 53774 / DSM 7210 / GS-15).